The chain runs to 524 residues: Bifunctional purine biosynthesis protein PurH (524 aa).

In terms of domain architecture, MGS-like spans 1–145; sequence MIQQALLSVS…KNHRDVTVIV (145 aa).

The protein belongs to the PurH family.

It carries out the reaction (6R)-10-formyltetrahydrofolate + 5-amino-1-(5-phospho-beta-D-ribosyl)imidazole-4-carboxamide = 5-formamido-1-(5-phospho-D-ribosyl)imidazole-4-carboxamide + (6S)-5,6,7,8-tetrahydrofolate. The enzyme catalyses IMP + H2O = 5-formamido-1-(5-phospho-D-ribosyl)imidazole-4-carboxamide. It functions in the pathway purine metabolism; IMP biosynthesis via de novo pathway; 5-formamido-1-(5-phospho-D-ribosyl)imidazole-4-carboxamide from 5-amino-1-(5-phospho-D-ribosyl)imidazole-4-carboxamide (10-formyl THF route): step 1/1. Its pathway is purine metabolism; IMP biosynthesis via de novo pathway; IMP from 5-formamido-1-(5-phospho-D-ribosyl)imidazole-4-carboxamide: step 1/1. This is Bifunctional purine biosynthesis protein PurH from Ralstonia nicotianae (strain ATCC BAA-1114 / GMI1000) (Ralstonia solanacearum).